The following is a 540-amino-acid chain: Keratin, type II cytoskeletal 73 (540 aa).

The interval M1–Q131 is head. The interval E132–L167 is coil 1A. Residues E132–M445 enclose the IF rod domain. The segment at Q168–Y186 is linker 1. The coil 1B stretch occupies residues I187 to I278. The linker 12 stretch occupies residues Q279–I302. The tract at residues I303–E441 is coil 2. Residues E442 to R540 form a tail region. Positions S502–R540 are disordered. Positions G526–R540 are enriched in polar residues.

Belongs to the intermediate filament family. As to quaternary structure, heterotetramer of two type I and two type II keratins. As to expression, highly expressed in hair follicles from scalp. In hair, it is specifically present in the inner root sheath (IRS) of the hair follicle. Present in the IRS cuticle, but not in Henle or Huxley layers of the IRS. In the IRS cuticle, it is expressed between the lowermost bulb region of the cuticle and the region where Henle cells undergo abrupt terminal differentiation. Detected up to the uppermost cortex region where cuticle cells terminally differentiate (at protein level).

Its function is as follows. Has a role in hair formation. Specific component of keratin intermediate filaments in the inner root sheath (IRS) of the hair follicle. This Homo sapiens (Human) protein is Keratin, type II cytoskeletal 73 (KRT73).